Reading from the N-terminus, the 139-residue chain is Large-conductance mechanosensitive channel (139 aa).

The next 2 membrane-spanning stretches (helical) occupy residues 9–29 (AFAV…GAAF) and 79–99 (IQSV…VKAI).

The protein belongs to the MscL family. As to quaternary structure, homopentamer.

It is found in the cell inner membrane. Channel that opens in response to stretch forces in the membrane lipid bilayer. May participate in the regulation of osmotic pressure changes within the cell. The chain is Large-conductance mechanosensitive channel from Pseudomonas fluorescens (strain SBW25).